The sequence spans 1071 residues: SLIT-ROBO Rho GTPase-activating protein 2 (1071 aa).

The 304-residue stretch at 22 to 325 (KEIRAQLTEQ…AVENLDATSD (304 aa)) folds into the F-BAR domain. Basic and acidic residues predominate over residues 181–203 (LKEAEKQEEKQIGKSVKQEDRQT). Residues 181–211 (LKEAEKQEEKQIGKSVKQEDRQTPRSPDSTA) form a disordered region. S206 carries the post-translational modification Phosphoserine. The stretch at 363–401 (QSELVQRCQQLQSRLSTLKIENEEVKKTMEATLQTIQDI) forms a coiled coil. Residues S427, S500, S691, and S695 each carry the phosphoserine modification. Residues 489-679 (ARRSSTVRKQ…TIIIQHENIF (191 aa)) form the Rho-GAP domain. Residues 700 to 726 (CDSTHGETTSAEDSTQDVTAEHHTSDD) form a disordered region. Residues 705 to 717 (GETTSAEDSTQDV) are compositionally biased toward polar residues. S724 carries the post-translational modification Phosphoserine. Residues 728–787 (CEPIEAIAKFDYVGRTARELSFKKGASLLLYQRASDDWWEGRHNGIDGLIPHQYIVVQDT) enclose the SH3 domain. At S795 the chain carries Phosphoserine. 2 disordered regions span residues 795-819 (SSPKSEIEVMSEPPEEKVTARTGAS) and 838-918 (RKRP…DSPQ). Residues 855-868 (HGLGSSLTDSSSLG) are compositionally biased toward low complexity. Polar residues-rich tracts occupy residues 874–885 (RPSSQPIMSQNL) and 897–907 (GHGSLNSISRH). At S916 the chain carries Phosphoserine. Residue R927 is modified to Symmetric dimethylarginine; by PRMT5. A Phosphoserine modification is found at S930. Residues 940–968 (EVIAQDIEATMNSALNELQELERQSSAKH) adopt a coiled-coil conformation. The interval 984–1012 (PVVAPTSEPSSPLHTQLLKDPEPAFQRSA) is disordered. 4 positions are modified to phosphoserine: S990, S994, S1013, and S1027. The interval 1029-1071 (KMAAPVKPPATRPKPTVFPKTNATSPGVNSSASPQATDKSCTV) is disordered. The segment covering 1047 to 1071 (PKTNATSPGVNSSASPQATDKSCTV) has biased composition (polar residues).

In terms of assembly, homodimer. Forms a heterooligomer with SRGAP1 and SRGAP3 through its F-BAR domain. Interacts (via SH3 domain) with GPHN. Interacts (via SH3 domain) with FMNL1 (activated by RAC1); regulates the actin filament severing activity of FMNL1 and actin dynamics. Interacts (via SH3 domain) with FMNL3. Interacts with RAC1; specifically stimulates RAC1 GTPase activity. Interacts (via F-BAR domain) with HOMER1. Interacts with ROBO1 and ROBO2. Interacts with FASLG. Interacts with PRMT5. Methylation at Arg-927 is required for the stimulation of cell migration, dimerization and localization at the plasma membrane protrusions.

Its subcellular location is the cell membrane. The protein resides in the cell projection. The protein localises to the dendritic spine. It localises to the postsynaptic density. It is found in the postsynaptic cell membrane. Its subcellular location is the lamellipodium. The protein resides in the cytoplasmic vesicle. The protein localises to the phagosome. It localises to the nucleus. It is found in the cytoplasm. Its subcellular location is the cytosol. In terms of biological role, postsynaptic RAC1 GTPase activating protein (GAP) that plays a key role in neuronal morphogenesis and migration mainly during development of the cerebral cortex. Regulates excitatory and inhibitory synapse maturation and density in cortical pyramidal neurons. SRGAP2/SRGAP2A limits excitatory and inhibitory synapse density through its RAC1-specific GTPase activating activity, while it promotes maturation of both excitatory and inhibitory synapses through its ability to bind to the postsynaptic scaffolding protein HOMER1 at excitatory synapses, and the postsynaptic protein GPHN at inhibitory synapses. Mechanistically, acts by binding and deforming membranes, thereby regulating actin dynamics to regulate cell migration and differentiation. Promotes cell repulsion and contact inhibition of locomotion: localizes to protrusions with curved edges and controls the duration of RAC1 activity in contact protrusions. In non-neuronal cells, may also play a role in cell migration by regulating the formation of lamellipodia and filopodia. The chain is SLIT-ROBO Rho GTPase-activating protein 2 from Mus musculus (Mouse).